The sequence spans 576 residues: 2-isopropylmalate synthase (576 aa).

Positions 31–305 (PIWMSTDLRD…DPGLDFSHVN (275 aa)) constitute a Pyruvate carboxyltransferase domain. 4 residues coordinate Mg(2+): Asp40, His244, His246, and Asn280. The tract at residues 437–576 (ADGPIGYVSH…RGMAPSMELA (140 aa)) is regulatory domain.

It belongs to the alpha-IPM synthase/homocitrate synthase family. LeuA type 2 subfamily. In terms of assembly, homodimer. Mg(2+) serves as cofactor.

It is found in the cytoplasm. It carries out the reaction 3-methyl-2-oxobutanoate + acetyl-CoA + H2O = (2S)-2-isopropylmalate + CoA + H(+). The protein operates within amino-acid biosynthesis; L-leucine biosynthesis; L-leucine from 3-methyl-2-oxobutanoate: step 1/4. Its function is as follows. Catalyzes the condensation of the acetyl group of acetyl-CoA with 3-methyl-2-oxobutanoate (2-ketoisovalerate) to form 3-carboxy-3-hydroxy-4-methylpentanoate (2-isopropylmalate). This Ralstonia nicotianae (strain ATCC BAA-1114 / GMI1000) (Ralstonia solanacearum) protein is 2-isopropylmalate synthase.